We begin with the raw amino-acid sequence, 314 residues long: Acetyl-coenzyme A carboxylase carboxyl transferase subunit alpha (314 aa).

One can recognise a CoA carboxyltransferase C-terminal domain in the interval 32 to 289 (EIDMLEASLE…KSAFVEQLDS (258 aa)).

This sequence belongs to the AccA family. In terms of assembly, acetyl-CoA carboxylase is a heterohexamer composed of biotin carboxyl carrier protein (AccB), biotin carboxylase (AccC) and two subunits each of ACCase subunit alpha (AccA) and ACCase subunit beta (AccD).

The protein resides in the cytoplasm. It carries out the reaction N(6)-carboxybiotinyl-L-lysyl-[protein] + acetyl-CoA = N(6)-biotinyl-L-lysyl-[protein] + malonyl-CoA. It participates in lipid metabolism; malonyl-CoA biosynthesis; malonyl-CoA from acetyl-CoA: step 1/1. In terms of biological role, component of the acetyl coenzyme A carboxylase (ACC) complex. First, biotin carboxylase catalyzes the carboxylation of biotin on its carrier protein (BCCP) and then the CO(2) group is transferred by the carboxyltransferase to acetyl-CoA to form malonyl-CoA. The sequence is that of Acetyl-coenzyme A carboxylase carboxyl transferase subunit alpha from Staphylococcus aureus (strain bovine RF122 / ET3-1).